Reading from the N-terminus, the 114-residue chain is U5-lycotoxin-Ls1a (114 aa).

Residues 1–20 form the signal peptide; that stretch reads MKYQILFGVVFLTLLSYCYS. Positions 21–45 are excised as a propeptide; sequence EIEDEFENFVDEEMVEADDPFSLAR. Intrachain disulfides connect Cys-51-Cys-66, Cys-65-Cys-93, and Cys-77-Cys-91.

The protein belongs to the neurotoxin 19 (CSTX) family. 04 (U1-Lctx) subfamily. As to expression, expressed by the venom gland.

It is found in the secreted. This Lycosa singoriensis (Wolf spider) protein is U5-lycotoxin-Ls1a.